We begin with the raw amino-acid sequence, 215 residues long: UPF0502 protein YceH (215 aa).

Lys-80 is subject to N6-acetyllysine.

This sequence belongs to the UPF0502 family.

The polypeptide is UPF0502 protein YceH (Escherichia fergusonii (strain ATCC 35469 / DSM 13698 / CCUG 18766 / IAM 14443 / JCM 21226 / LMG 7866 / NBRC 102419 / NCTC 12128 / CDC 0568-73)).